The chain runs to 485 residues: Alpha-amylase (485 aa).

A signal peptide spans 1–18 (MQHLSILLVVLGSSIAFA). Gln19 is modified (pyrrolidone carboxylic acid). The cysteines at positions 46 and 102 are disulfide-linked. 3 residues coordinate Ca(2+): Asn116, Arg163, and Asp172. An intrachain disulfide couples Cys152 to Cys165. A chloride-binding site is contributed by Arg200. Asp202 functions as the Nucleophile in the catalytic mechanism. His206 contributes to the Ca(2+) binding site. Catalysis depends on Glu238, which acts as the Proton donor. Position 301 (Asn301) interacts with chloride. Cysteines 369 and 375 form a disulfide. Residues Asn423 and Asn449 are each glycosylated (N-linked (GlcNAc...) asparagine). The cysteines at positions 440 and 452 are disulfide-linked.

This sequence belongs to the glycosyl hydrolase 13 family. As to quaternary structure, monomer. Requires Ca(2+) as cofactor. The cofactor is chloride.

It catalyses the reaction Endohydrolysis of (1-&gt;4)-alpha-D-glucosidic linkages in polysaccharides containing three or more (1-&gt;4)-alpha-linked D-glucose units.. Involved in the digestion of starch. The polypeptide is Alpha-amylase (Hypothenemus hampei (Coffee berry borer)).